The primary structure comprises 371 residues: MAAPARRLCHIAFHVPAGQPLARDLQRIFGFQPLAVREAGGWRQLALRSGDAVFLVNEGTGPREPLYGLDPHHSVPSATNLCFDVEDVDRAARALAARGCIMPVPPTRVRDAQGTATYTVVSSPAGNLSLTLLQRAGYRGSFLPGFRPLPCTPGPGWVSHVDHLTLACTSGSSPTLMRWFHNCLGFHHLPLSPGEDPELGLKVAVGSGRGGLRLTALQTLPNSTVPTLVLAESLPGLTSEQDQVEQFLTRHGGPGLQHVGLYTPNIIDASEGMAKAGGRLLTPPEAYYQQPGKEEQILASGHKPSFLERQGILLDGDKDEFLLQVFTKSLFDEDTFFLELIERQGATGFGQNNIRALWQSVQEEAARAQGT.

VOC domains follow at residues R7 to R135 and H160 to K328. Fe cation contacts are provided by H163, H258, and E339.

Belongs to the 4HPPD family. The cofactor is Fe cation.

It is found in the mitochondrion. The catalysed reaction is 3-(4-hydroxyphenyl)pyruvate + O2 = (S)-4-hydroxymandelate + CO2. In terms of biological role, iron-dependent dioxygenase that catalyzes the conversion of 4-hydroxyphenylpyruvate (4-HPPA) to 4-hydroxymandelate (4-HMA) in the mitochondria, one of the steps in the biosynthesis of coenzyme Q10 from tyrosine. The polypeptide is 4-hydroxyphenylpyruvate dioxygenase-like protein (Rattus norvegicus (Rat)).